The chain runs to 250 residues: N-acyl homoserine lactonase (250 aa).

Zn(2+) is bound by residues histidine 104, histidine 106, aspartate 108, histidine 109, histidine 169, aspartate 191, and histidine 235.

It belongs to the metallo-beta-lactamase superfamily. Monomer. The cofactor is Zn(2+).

The enzyme catalyses an N-acyl-L-homoserine lactone + H2O = an N-acyl-L-homoserine + H(+). In terms of biological role, catalyzes hydrolysis of N-hexanoyl-(S)-homoserine lactone, but not the R-enantiomer. Hydrolyzes short- and long-chain N-acyl homoserine lactones with or without 3-oxo substitution at C3, has maximum activity on C10-AHL. This is N-acyl homoserine lactonase from Bacillus thuringiensis subsp. indiana.